We begin with the raw amino-acid sequence, 128 residues long: Probable 4-amino-4-deoxy-L-arabinose-phosphoundecaprenol flippase subunit ArnF (128 aa).

Over 1 to 2 (MG) the chain is Cytoplasmic. The chain crosses the membrane as a helical span at residues 3–23 (LMWGLFSVIIASVAQLSLGFA). Residues 24-35 (ASHLPPMTHLWD) are Periplasmic-facing. Residues 36–56 (FIAALLAFGLDARILLLGLLG) form a helical membrane-spanning segment. Residues 57 to 76 (YLLSVFCWYKTLHKLALSKA) lie on the Cytoplasmic side of the membrane. Residues 77–97 (YALLSMSYVLVWIASMVLPGW) form a helical membrane-spanning segment. The Periplasmic segment spans residues 98–100 (EGT). Residues 101–121 (FSLKALLGVACIMSGLMLIFL) form a helical membrane-spanning segment. The Cytoplasmic segment spans residues 122–128 (PMTKQRY).

The protein belongs to the ArnF family. Heterodimer of ArnE and ArnF.

It is found in the cell inner membrane. The protein operates within bacterial outer membrane biogenesis; lipopolysaccharide biosynthesis. In terms of biological role, translocates 4-amino-4-deoxy-L-arabinose-phosphoundecaprenol (alpha-L-Ara4N-phosphoundecaprenol) from the cytoplasmic to the periplasmic side of the inner membrane. This chain is Probable 4-amino-4-deoxy-L-arabinose-phosphoundecaprenol flippase subunit ArnF, found in Escherichia coli (strain 55989 / EAEC).